Here is a 229-residue protein sequence, read N- to C-terminus: Thiamine-phosphate synthase (229 aa).

4-amino-2-methyl-5-(diphosphooxymethyl)pyrimidine is bound by residues 38–42 (QFREK) and asparagine 73. Positions 74 and 93 each coordinate Mg(2+). Residue serine 111 coordinates 4-amino-2-methyl-5-(diphosphooxymethyl)pyrimidine. 137–139 (TLS) is a binding site for 2-[(2R,5Z)-2-carboxy-4-methylthiazol-5(2H)-ylidene]ethyl phosphate. Lysine 140 lines the 4-amino-2-methyl-5-(diphosphooxymethyl)pyrimidine pocket. 2-[(2R,5Z)-2-carboxy-4-methylthiazol-5(2H)-ylidene]ethyl phosphate contacts are provided by residues glycine 169 and 189–190 (IS).

The protein belongs to the thiamine-phosphate synthase family. Requires Mg(2+) as cofactor.

It carries out the reaction 2-[(2R,5Z)-2-carboxy-4-methylthiazol-5(2H)-ylidene]ethyl phosphate + 4-amino-2-methyl-5-(diphosphooxymethyl)pyrimidine + 2 H(+) = thiamine phosphate + CO2 + diphosphate. It catalyses the reaction 2-(2-carboxy-4-methylthiazol-5-yl)ethyl phosphate + 4-amino-2-methyl-5-(diphosphooxymethyl)pyrimidine + 2 H(+) = thiamine phosphate + CO2 + diphosphate. The enzyme catalyses 4-methyl-5-(2-phosphooxyethyl)-thiazole + 4-amino-2-methyl-5-(diphosphooxymethyl)pyrimidine + H(+) = thiamine phosphate + diphosphate. The protein operates within cofactor biosynthesis; thiamine diphosphate biosynthesis; thiamine phosphate from 4-amino-2-methyl-5-diphosphomethylpyrimidine and 4-methyl-5-(2-phosphoethyl)-thiazole: step 1/1. In terms of biological role, condenses 4-methyl-5-(beta-hydroxyethyl)thiazole monophosphate (THZ-P) and 2-methyl-4-amino-5-hydroxymethyl pyrimidine pyrophosphate (HMP-PP) to form thiamine monophosphate (TMP). This Streptococcus suis (strain 98HAH33) protein is Thiamine-phosphate synthase.